The sequence spans 177 residues: Interleukin-25 (177 aa).

The signal sequence occupies residues 1–32; it reads MRERPRLGEDSSLISLFLQVVAFLAMVMGTHT. Residues 58 to 81 are disordered; sequence PVPPLEPARPNRHPESCRASEDGP. Basic and acidic residues predominate over residues 69-78; it reads RHPESCRASE. Disulfide bonds link C110–C168 and C115–C170. N136 is a glycosylation site (N-linked (GlcNAc...) asparagine).

It belongs to the IL-17 family. As to expression, expressed at low levels in several tissues, including brain, kidney, lung, prostate, testis, spinal cord, adrenal gland, and trachea.

The protein localises to the secreted. Its function is as follows. Cytokine produced by various cells such as eosinophils, T-helper type 2 (Th2) cells or epithelial cells that plays a role in internal safety of adaptive immune responses by regulating cytokine production. Promotes and augments T-helper type 2 responses locally or systemically. Exerts its activity via its receptor composed of IL17RA and IL17RB for signal transduction. In turn, stimulates the JAK2-STAT5A pathway and promotes the secretion of type-2 associated cytokines including IL4, IL9 and IL13. Also induces the release of IL8, and IL6 from eosinophils through the combined activation of MAPK and NF-kappa-B pathways. Inhibits the differentiation of T-helper (Th17) cells via the production of IL4, IL5 and IL13. This Homo sapiens (Human) protein is Interleukin-25 (IL25).